The following is a 342-amino-acid chain: 4-hydroxythreonine-4-phosphate dehydrogenase (342 aa).

Substrate-binding residues include His140 and Thr141. His175, His220, and His275 together coordinate a divalent metal cation. The substrate site is built by Lys283, Asn292, and Arg301.

Belongs to the PdxA family. As to quaternary structure, homodimer. Zn(2+) serves as cofactor. Requires Mg(2+) as cofactor. Co(2+) is required as a cofactor.

The protein localises to the cytoplasm. The catalysed reaction is 4-(phosphooxy)-L-threonine + NAD(+) = 3-amino-2-oxopropyl phosphate + CO2 + NADH. It functions in the pathway cofactor biosynthesis; pyridoxine 5'-phosphate biosynthesis; pyridoxine 5'-phosphate from D-erythrose 4-phosphate: step 4/5. Catalyzes the NAD(P)-dependent oxidation of 4-(phosphooxy)-L-threonine (HTP) into 2-amino-3-oxo-4-(phosphooxy)butyric acid which spontaneously decarboxylates to form 3-amino-2-oxopropyl phosphate (AHAP). The sequence is that of 4-hydroxythreonine-4-phosphate dehydrogenase from Rhizobium meliloti (strain 1021) (Ensifer meliloti).